The sequence spans 217 residues: 3,4-dihydroxy-2-butanone 4-phosphate synthase (217 aa).

D-ribulose 5-phosphate contacts are provided by residues 37 to 38, Asp42, 150 to 154, and Glu174; these read RE and RRGHT. Residue Glu38 coordinates Mg(2+). A Mg(2+)-binding site is contributed by His153.

It belongs to the DHBP synthase family. As to quaternary structure, homodimer. Requires Mg(2+) as cofactor. Mn(2+) serves as cofactor.

The catalysed reaction is D-ribulose 5-phosphate = (2S)-2-hydroxy-3-oxobutyl phosphate + formate + H(+). It functions in the pathway cofactor biosynthesis; riboflavin biosynthesis; 2-hydroxy-3-oxobutyl phosphate from D-ribulose 5-phosphate: step 1/1. Catalyzes the conversion of D-ribulose 5-phosphate to formate and 3,4-dihydroxy-2-butanone 4-phosphate. In Yersinia pseudotuberculosis serotype O:1b (strain IP 31758), this protein is 3,4-dihydroxy-2-butanone 4-phosphate synthase.